We begin with the raw amino-acid sequence, 193 residues long: Urease accessory protein UreE (193 aa).

Residues 138-193 are disordered; it reads RGAYHSHGAHSHDQGHAAHDHGNEHKHDHGHDHVHGPGCDHDHDHDHGHHHDHKHD. The span at 147-193 shows a compositional bias: basic and acidic residues; that stretch reads HSHDQGHAAHDHGNEHKHDHGHDHVHGPGCDHDHDHDHGHHHDHKHD.

It belongs to the UreE family.

Its subcellular location is the cytoplasm. Its function is as follows. Involved in urease metallocenter assembly. Binds nickel. Probably functions as a nickel donor during metallocenter assembly. The chain is Urease accessory protein UreE from Rhizobium leguminosarum bv. trifolii (strain WSM2304).